Reading from the N-terminus, the 248-residue chain is Kallikrein-12 (248 aa).

An N-terminal signal peptide occupies residues 1 to 17 (MGLSIFLLLCVLGLSQA). Residues 22–246 (IFNGTECGRN…YVDWIRMIMR (225 aa)) enclose the Peptidase S1 domain. N-linked (GlcNAc...) asparagine glycosylation occurs at asparagine 24. 6 disulfides stabilise this stretch: cysteine 28-cysteine 161, cysteine 47-cysteine 63, cysteine 133-cysteine 235, cysteine 140-cysteine 206, cysteine 172-cysteine 186, and cysteine 196-cysteine 222. Catalysis depends on charge relay system residues histidine 62 and aspartate 108. N-linked (GlcNAc...) asparagine glycosylation occurs at asparagine 163. Serine 200 serves as the catalytic Charge relay system.

It belongs to the peptidase S1 family. Kallikrein subfamily.

Its subcellular location is the secreted. The chain is Kallikrein-12 (KLK12) from Homo sapiens (Human).